We begin with the raw amino-acid sequence, 559 residues long: 2,3-bisphosphoglycerate-independent phosphoglycerate mutase (559 aa).

Mn(2+) contacts are provided by Asp-28 and Ser-81. The active-site Phosphoserine intermediate is Ser-81. Substrate-binding positions include His-140, 170-171, Arg-206, Arg-213, 286-289, and Lys-361; these read RD and RADR. Positions 430, 434, 471, 472, and 501 each coordinate Mn(2+).

This sequence belongs to the BPG-independent phosphoglycerate mutase family. Monomer. It depends on Mn(2+) as a cofactor. Post-translationally, the N-terminus is blocked. Found ubiquitously in germinating seed.

It localises to the cytoplasm. It catalyses the reaction (2R)-2-phosphoglycerate = (2R)-3-phosphoglycerate. It participates in carbohydrate degradation; glycolysis; pyruvate from D-glyceraldehyde 3-phosphate: step 3/5. Its function is as follows. Catalyzes the interconversion of 2-phosphoglycerate and 3-phosphoglycerate. This chain is 2,3-bisphosphoglycerate-independent phosphoglycerate mutase, found in Zea mays (Maize).